The primary structure comprises 126 residues: MFS14 protein (126 aa).

Residues 1-23 (MALEAATAPRALLAACLVLLVLG) constitute a signal peptide (or 24, or 26).

In terms of tissue distribution, enhanced expression in male flowers. Accumulates in the tapetum.

The sequence is that of MFS14 protein (MFS14) from Zea mays (Maize).